The following is a 576-amino-acid chain: Alpha-1,3-arabinosyltransferase XAT3 (576 aa).

Over 1 to 19 (MKAGERPKLVRGVRQESRR) the chain is Cytoplasmic. Residues 20-40 (FRLLVIVVGFFLVSLTFVFVS) traverse the membrane as a helical; Signal-anchor for type II membrane protein segment. Residues 41–576 (KPDAILFSLN…LLEALDNLNP (536 aa)) lie on the Lumenal side of the membrane. Residues 64–171 (IQQKVNEPSG…KHKVTLPTVS (108 aa)) form a disordered region. Composition is skewed to basic and acidic residues over residues 73 to 98 (GESR…DAKP), 126 to 138 (THNK…KSHQ), and 147 to 163 (GESK…EQKH). Residues Asn-172, Asn-375, and Asn-443 are each glycosylated (N-linked (GlcNAc...) asparagine).

It belongs to the glycosyltransferase 61 family.

Its subcellular location is the golgi apparatus membrane. The protein operates within glycan metabolism. Glycosyltransferase involved in the arabinosylation of xylan, the major hemicellulose (non-cellulosic component) of primary and secondary walls of angiosperms. Possesses alpha-1,3-arabinosyltransferase activity, transferring an arabinofuranose residue to the xylan backbone. This Oryza sativa subsp. japonica (Rice) protein is Alpha-1,3-arabinosyltransferase XAT3.